Consider the following 605-residue polypeptide: Mini-chromosome maintenance complex-binding protein (605 aa).

A phosphoserine mark is found at serine 147 and serine 150.

The protein belongs to the MCMBP family. In terms of assembly, interacts with the MCM complex.

The protein resides in the nucleus. Associated component of the MCM complex that acts as a regulator of DNA replication. Binds to the MCM complex during late S phase and may act by promoting the disassembly of the MCM complex from chromatin. The polypeptide is Mini-chromosome maintenance complex-binding protein (Drosophila melanogaster (Fruit fly)).